A 154-amino-acid polypeptide reads, in one-letter code: Fibroblast growth factor 2 (154 aa).

Positions 1–9 (MAAGSITSL) are excised as a propeptide. Positions 1-20 (MAAGSITSLPALPEDGGGAF) are disordered. Asn-35 is a heparin binding site. A Phosphotyrosine; by TEC modification is found at Tyr-81. Residue Lys-94 forms a Glycyl lysine isopeptide (Lys-Gly) (interchain with G-Cter in SUMO1) linkage. Residues 127–143 (KRTGQYKLGSKTGPGQK) form a heparin-binding region.

The protein belongs to the heparin-binding growth factors family. In terms of assembly, monomer. Homodimer. Interacts with FGFR1, FGFR2, FGFR3 and FGFR4. Affinity between fibroblast growth factors (FGFs) and their receptors is increased by heparan sulfate glycosaminoglycans that function as coreceptors. Interacts with CSPG4, FGFBP1 and TEC. Found in a complex with FGFBP1, FGF1 and FGF2. Interacts with FGFBP3. Interacts with integrin ITGAV:ITGB3; the interaction is required for FGF2 signaling. Interacts with SNORC (via the extracellular domain). Interacts with GPC3. Phosphorylation at Tyr-81 regulates FGF2 unconventional secretion. Found in all tissues examined.

It is found in the secreted. It localises to the nucleus. Acts as a ligand for FGFR1, FGFR2, FGFR3 and FGFR4. Also acts as an integrin ligand which is required for FGF2 signaling. Binds to integrin ITGAV:ITGB3. Plays an important role in the regulation of cell survival, cell division, cell differentiation and cell migration. Functions as a potent mitogen in vitro. Can induce angiogenesis. Mediates phosphorylation of ERK1/2 and thereby promotes retinal lens fiber differentiation. The chain is Fibroblast growth factor 2 (Fgf2) from Rattus norvegicus (Rat).